Reading from the N-terminus, the 356-residue chain is UDP-N-acetylglucosamine--N-acetylmuramyl-(pentapeptide) pyrophosphoryl-undecaprenol N-acetylglucosamine transferase (356 aa).

Residues 14–16 (TGG), N126, R162, S190, I244, and Q289 contribute to the UDP-N-acetyl-alpha-D-glucosamine site.

Belongs to the glycosyltransferase 28 family. MurG subfamily.

It localises to the cell inner membrane. It catalyses the reaction di-trans,octa-cis-undecaprenyl diphospho-N-acetyl-alpha-D-muramoyl-L-alanyl-D-glutamyl-meso-2,6-diaminopimeloyl-D-alanyl-D-alanine + UDP-N-acetyl-alpha-D-glucosamine = di-trans,octa-cis-undecaprenyl diphospho-[N-acetyl-alpha-D-glucosaminyl-(1-&gt;4)]-N-acetyl-alpha-D-muramoyl-L-alanyl-D-glutamyl-meso-2,6-diaminopimeloyl-D-alanyl-D-alanine + UDP + H(+). It participates in cell wall biogenesis; peptidoglycan biosynthesis. Cell wall formation. Catalyzes the transfer of a GlcNAc subunit on undecaprenyl-pyrophosphoryl-MurNAc-pentapeptide (lipid intermediate I) to form undecaprenyl-pyrophosphoryl-MurNAc-(pentapeptide)GlcNAc (lipid intermediate II). This is UDP-N-acetylglucosamine--N-acetylmuramyl-(pentapeptide) pyrophosphoryl-undecaprenol N-acetylglucosamine transferase from Cupriavidus necator (strain ATCC 17699 / DSM 428 / KCTC 22496 / NCIMB 10442 / H16 / Stanier 337) (Ralstonia eutropha).